A 322-amino-acid polypeptide reads, in one-letter code: UV DNA damage endonuclease (322 aa).

The protein belongs to the uve1/UvsE family.

In terms of biological role, component in a DNA repair pathway. Removal of UV LIGHT damaged nucleotides. Recognizes pyrimidine dimers and cleave a phosphodiester bond immediately 5' to the lesion. In Halalkalibacterium halodurans (strain ATCC BAA-125 / DSM 18197 / FERM 7344 / JCM 9153 / C-125) (Bacillus halodurans), this protein is UV DNA damage endonuclease.